The following is a 1958-amino-acid chain: Echinoderm microtubule-associated protein-like 6 (1958 aa).

10 WD repeats span residues 59–100 (GHND…TVSI), 104–145 (VHTH…LLAS), 148–187 (GHSD…LTAK), 195–233 (GDLQ…RTIQ), 235–273 (AHSA…TKID), 280–321 (GYKG…LILQ), 323–362 (HCEG…LIAR), 364–403 (NMEE…EVVH), 406–445 (DRKE…KKIG), and 561–601 (GHSA…VSNG). The tract at residues 604 to 627 (ETTPQEGGADSYSEESDSDFSDVP) is disordered. Over residues 615–627 (YSEESDSDFSDVP) the composition is skewed to acidic residues. WD repeat units follow at residues 725 to 766 (GHDD…CLSL), 770 to 811 (HHQR…KIAT), 814 to 853 (GHKD…FTSK), 861 to 900 (GKLE…KTVK), 901 to 940 (AHDG…KTYA), 996 to 1035 (HMEG…RMLA), 1038 to 1077 (KLKK…DMLS), 1080 to 1120 (HRKE…RVGI), 1191 to 1230 (SDVT…QHAR), and 1236 to 1276 (GHSA…TQES). The span at 1322–1337 (KPHQQLKEVSMEERPP) shows a compositional bias: basic and acidic residues. The interval 1322–1352 (KPHQQLKEVSMEERPPVSRAAPQPEKLQKNN) is disordered. WD repeat units lie at residues 1412–1456 (EHTD…TLSM), 1460–1501 (FHTK…KVAS), 1504–1543 (GHLE…LLYK), 1553–1591 (AKMQ…RLVA), 1593–1638 (AHTG…CRAF), 1685–1724 (HMEG…LLNK), 1726–1767 (NLGH…GKKR), 1768–1807 (DRKS…SLNR), 1880–1919 (ADKA…KFAK), and 1925–1958 (GHSA…WRCL).

The protein belongs to the WD repeat EMAP family.

Its subcellular location is the cytoplasm. It is found in the cytoskeleton. In terms of biological role, may modify the assembly dynamics of microtubules, such that microtubules are slightly longer, but more dynamic. This chain is Echinoderm microtubule-associated protein-like 6 (Eml6), found in Mus musculus (Mouse).